We begin with the raw amino-acid sequence, 362 residues long: Probable dual-specificity RNA methyltransferase RlmN (362 aa).

The active-site Proton acceptor is the Glu-105. One can recognise a Radical SAM core domain in the interval 111-344 (HNYGNSVCVT…VTIRREQGHD (234 aa)). Cys-118 and Cys-349 are disulfide-bonded. [4Fe-4S] cluster contacts are provided by Cys-125, Cys-129, and Cys-132. S-adenosyl-L-methionine contacts are provided by residues 175-176 (GE), Ser-207, 230-232 (SLH), and Asn-306. Cys-349 serves as the catalytic S-methylcysteine intermediate.

Belongs to the radical SAM superfamily. RlmN family. The cofactor is [4Fe-4S] cluster.

It is found in the cytoplasm. The enzyme catalyses adenosine(2503) in 23S rRNA + 2 reduced [2Fe-2S]-[ferredoxin] + 2 S-adenosyl-L-methionine = 2-methyladenosine(2503) in 23S rRNA + 5'-deoxyadenosine + L-methionine + 2 oxidized [2Fe-2S]-[ferredoxin] + S-adenosyl-L-homocysteine. It carries out the reaction adenosine(37) in tRNA + 2 reduced [2Fe-2S]-[ferredoxin] + 2 S-adenosyl-L-methionine = 2-methyladenosine(37) in tRNA + 5'-deoxyadenosine + L-methionine + 2 oxidized [2Fe-2S]-[ferredoxin] + S-adenosyl-L-homocysteine. Functionally, specifically methylates position 2 of adenine 2503 in 23S rRNA and position 2 of adenine 37 in tRNAs. The sequence is that of Probable dual-specificity RNA methyltransferase RlmN from Halalkalibacterium halodurans (strain ATCC BAA-125 / DSM 18197 / FERM 7344 / JCM 9153 / C-125) (Bacillus halodurans).